Here is a 371-residue protein sequence, read N- to C-terminus: Protein IQ-DOMAIN 7 (371 aa).

The segment at 1 to 32 (MGGSGNWIRSLISNRKPVNDQQEKLSDKSSKK) is disordered. The segment covering 17-29 (PVNDQQEKLSDKS) has biased composition (basic and acidic residues). 2 consecutive IQ domains span residues 93 to 121 (REWA…AVVR) and 122 to 144 (IQAI…CMQA). Positions 125–141 (IFRGRQVRKQAAVTLRC) are calmodulin-binding. Disordered stretches follow at residues 285-308 (SGMS…PVAF) and 327-371 (LTQS…SQRS). 2 stretches are compositionally biased toward polar residues: residues 297 to 308 (STSSTSQSPVAF) and 327 to 341 (LTQS…SGLS).

The protein belongs to the IQD family. As to quaternary structure, binds to multiple calmodulin (CaM) in the presence of Ca(2+) and CaM-like proteins.

Its subcellular location is the nucleus. The protein resides in the nucleus envelope. It localises to the cytoplasm. The protein localises to the cytoskeleton. Functionally, may be involved in cooperative interactions with calmodulins or calmodulin-like proteins. Recruits calmodulin proteins to microtubules, thus being a potential scaffold in cellular signaling and trafficking. May associate with nucleic acids and regulate gene expression at the transcriptional or post-transcriptional level. The sequence is that of Protein IQ-DOMAIN 7 from Arabidopsis thaliana (Mouse-ear cress).